The primary structure comprises 275 residues: Large ribosomal subunit protein uL2 (275 aa).

The tract at residues 219–263 (EVRGAAMNPRDHPHGGGEGRAPRGMPTPKTKWGKPARGVKTRHNP) is disordered. Residues 227 to 239 (PRDHPHGGGEGRA) are compositionally biased toward basic and acidic residues. Residues 249-262 (KWGKPARGVKTRHN) are compositionally biased toward basic residues.

Belongs to the universal ribosomal protein uL2 family. As to quaternary structure, part of the 50S ribosomal subunit. Forms a bridge to the 30S subunit in the 70S ribosome.

Functionally, one of the primary rRNA binding proteins. Required for association of the 30S and 50S subunits to form the 70S ribosome, for tRNA binding and peptide bond formation. It has been suggested to have peptidyltransferase activity; this is somewhat controversial. Makes several contacts with the 16S rRNA in the 70S ribosome. This Roseiflexus castenholzii (strain DSM 13941 / HLO8) protein is Large ribosomal subunit protein uL2.